We begin with the raw amino-acid sequence, 605 residues long: Alpha-amylase (605 aa).

An N-terminal signal peptide occupies residues 1-33; it reads MGVRRSLAALLAALLGCATSLVALTVAASPAHA. Positions 130 and 189 each coordinate Ca(2+). The Nucleophile role is filled by D219. H223 contacts Ca(2+). The active-site Proton donor is the E253. The region spanning 500 to 605 is the CBM20 domain; the sequence is GDDCTTVTAR…CSQNFYDSWR (106 aa).

The protein belongs to the glycosyl hydrolase 13 family. In terms of assembly, monomer. It depends on Ca(2+) as a cofactor.

It carries out the reaction Endohydrolysis of (1-&gt;4)-alpha-D-glucosidic linkages in polysaccharides containing three or more (1-&gt;4)-alpha-linked D-glucose units.. The protein is Alpha-amylase (tam) of Thermomonospora curvata.